We begin with the raw amino-acid sequence, 236 residues long: DNA repair protein RecO (236 aa).

It belongs to the RecO family.

Its function is as follows. Involved in DNA repair and RecF pathway recombination. The sequence is that of DNA repair protein RecO from Haemophilus influenzae (strain 86-028NP).